The primary structure comprises 186 residues: Elongation factor P (186 aa).

This sequence belongs to the elongation factor P family.

It is found in the cytoplasm. It participates in protein biosynthesis; polypeptide chain elongation. Functionally, involved in peptide bond synthesis. Stimulates efficient translation and peptide-bond synthesis on native or reconstituted 70S ribosomes in vitro. Probably functions indirectly by altering the affinity of the ribosome for aminoacyl-tRNA, thus increasing their reactivity as acceptors for peptidyl transferase. The chain is Elongation factor P from Brucella canis (strain ATCC 23365 / NCTC 10854 / RM-666).